The primary structure comprises 60 residues: MAVQQNKKSPSKRGMHRSHNALNTPGLAIEPTTGETHLRHHISATGFYRGRKVLKTKADA.

Residues 1–36 are disordered; the sequence is MAVQQNKKSPSKRGMHRSHNALNTPGLAIEPTTGET. Over residues 9 to 19 the composition is skewed to basic residues; the sequence is SPSKRGMHRSH.

The protein belongs to the bacterial ribosomal protein bL32 family.

The chain is Large ribosomal subunit protein bL32 from Methylibium petroleiphilum (strain ATCC BAA-1232 / LMG 22953 / PM1).